We begin with the raw amino-acid sequence, 202 residues long: MGNIMEGKSVEELSSTECHQWYKKFMTECPSGQLTLYEFRQFFGLKNLSPSASQYVEQMFETFDFNKDGYIDFMEYVAALSLVLKGKVEQKLRWYFKLYDVDGNGCIDRDELLTIIRAIRTINPWSDSSMSAEEFTDTVFAKIDINGDGELSLEEFMEGVQKDQMLLDTLTRSLDLTGIVRRLQNGEHEEAGTGDLAAEAAG.

Gly2 carries the N-myristoyl glycine lipid modification. Deamidated asparagine is present on Asn3. 4 consecutive EF-hand domains span residues Ser31 to Ser49, Ser51 to Gly86, Lys87 to Ile122, and Ser131 to Leu166. Ca(2+)-binding residues include Asp64, Asn66, Asp68, Tyr70, Glu75, Asp100, Asp102, Asn104, Cys106, Glu111, Asp144, Asn146, Asp148, Glu150, and Glu155.

Homodimer. As to expression, in the retina, expressed in rod photoreceptors (at protein level). Expressed in cone photoreceptors.

The protein resides in the membrane. Its subcellular location is the photoreceptor inner segment. The protein localises to the cell projection. It is found in the cilium. It localises to the photoreceptor outer segment. In terms of biological role, stimulates retinal guanylyl cyclase when free calcium ions concentration is low and inhibits guanylyl cyclase when free calcium ions concentration is elevated. This Ca(2+)-sensitive regulation of retinal guanylyl cyclase is a key event in recovery of the dark state of rod photoreceptors following light exposure. May be involved in cone photoreceptor light response and recovery of response in bright light. The chain is Guanylyl cyclase-activating protein 1 (Guca1a) from Mus musculus (Mouse).